Consider the following 572-residue polypeptide: Urease subunit alpha (572 aa).

Residues 134–572 (AGIDSHIHLI…AAMNQRYFFG (439 aa)) enclose the Urease domain. H139, H141, and K222 together coordinate Ni(2+). An N6-carboxylysine modification is found at K222. H224 is a binding site for substrate. Ni(2+)-binding residues include H251 and H277. H325 (proton donor) is an active-site residue. Position 365 (D365) interacts with Ni(2+).

It belongs to the metallo-dependent hydrolases superfamily. Urease alpha subunit family. As to quaternary structure, heterotrimer of UreA (gamma), UreB (beta) and UreC (alpha) subunits. Three heterotrimers associate to form the active enzyme. Ni cation is required as a cofactor. In terms of processing, carboxylation allows a single lysine to coordinate two nickel ions.

Its subcellular location is the cytoplasm. The catalysed reaction is urea + 2 H2O + H(+) = hydrogencarbonate + 2 NH4(+). The protein operates within nitrogen metabolism; urea degradation; CO(2) and NH(3) from urea (urease route): step 1/1. This is Urease subunit alpha from Yersinia enterocolitica serotype O:8 / biotype 1B (strain NCTC 13174 / 8081).